We begin with the raw amino-acid sequence, 767 residues long: Serine/threonine-protein kinase DCLK2 (767 aa).

The disordered stretch occupies residues 1–44; sequence MASTRSIELEHFEERDKRPRPGSRRGAPSSSGGSSISGPKGNGL. A compositionally biased stretch (basic and acidic residues) spans 7–19; the sequence is IELEHFEERDKRP. The segment covering 24 to 43 has biased composition (low complexity); the sequence is RRGAPSSSGGSSISGPKGNG. Position 61 is a phosphothreonine (Thr-61). 2 consecutive Doublecortin domains span residues 72-158 and 196-279; these read KKAR…VDYT and KLVT…AQDD. Over residues 301–311 the composition is skewed to low complexity; the sequence is KYSGSRSPGLS. Residues 301–391 form a disordered region; it reads KYSGSRSPGL…GPELDRCMSP (91 aa). Residues 327–338 are compositionally biased toward polar residues; it reads SAYSTAKSPVNG. Residues 339–362 show a composition bias toward low complexity; sequence TPSSQLSTPKSTKSSSSSPTSPGS. Residues 369-380 show a composition bias toward polar residues; it reads ISAQGRSSSNVN. A Phosphoserine modification is found at Ser-377. Residues 409–666 form the Protein kinase domain; that stretch reads YRIGKVIGDG…AGEILSHPWV (258 aa). ATP-binding positions include 415 to 423 and Lys-438; that span reads IGDGNFAVV. Asp-530 functions as the Proton acceptor in the catalytic mechanism. Position 662 is a phosphoserine (Ser-662). Thr-681 is modified (phosphothreonine). Residues 721–734 show a composition bias toward basic and acidic residues; it reads HCRDSSKSSREQTS. The tract at residues 721-767 is disordered; that stretch reads HCRDSSKSSREQTSAREAPPPPESPRPPGPPATSGCDPAGTWRRHRD. Residues 738–751 are compositionally biased toward pro residues; sequence APPPPESPRPPGPP.

The protein belongs to the protein kinase superfamily. CAMK Ser/Thr protein kinase family. CaMK subfamily. Interacts with MAPK8IP1/JIP-1, MAPK8IP2/JIP-2, MAPK9/JNK2, PPP1R9B/NEURABIN-2 and actin. Binds to and stabilizes microtubules; binding affinity is strongly reduced by autophosphorylation. In terms of processing, autophosphorylated.

The protein localises to the cytoplasm. The protein resides in the cytoskeleton. The enzyme catalyses L-seryl-[protein] + ATP = O-phospho-L-seryl-[protein] + ADP + H(+). It carries out the reaction L-threonyl-[protein] + ATP = O-phospho-L-threonyl-[protein] + ADP + H(+). Functionally, protein kinase with a significantly reduced Ca(2+)+/CAM affinity and dependence compared to other members of the CaMK family. May play a role in the down-regulation of CRE-dependent gene activation probably by phosphorylation of the CREB coactivator CRTC2/TORC2 and the resulting retention of TORC2 in the cytoplasm. This chain is Serine/threonine-protein kinase DCLK2 (Dclk2), found in Rattus norvegicus (Rat).